Here is a 603-residue protein sequence, read N- to C-terminus: Proline--tRNA ligase (603 aa).

Belongs to the class-II aminoacyl-tRNA synthetase family. ProS type 1 subfamily. Homodimer.

It localises to the cytoplasm. The catalysed reaction is tRNA(Pro) + L-proline + ATP = L-prolyl-tRNA(Pro) + AMP + diphosphate. In terms of biological role, catalyzes the attachment of proline to tRNA(Pro) in a two-step reaction: proline is first activated by ATP to form Pro-AMP and then transferred to the acceptor end of tRNA(Pro). As ProRS can inadvertently accommodate and process non-cognate amino acids such as alanine and cysteine, to avoid such errors it has two additional distinct editing activities against alanine. One activity is designated as 'pretransfer' editing and involves the tRNA(Pro)-independent hydrolysis of activated Ala-AMP. The other activity is designated 'posttransfer' editing and involves deacylation of mischarged Ala-tRNA(Pro). The misacylated Cys-tRNA(Pro) is not edited by ProRS. The protein is Proline--tRNA ligase of Paenarthrobacter aurescens (strain TC1).